We begin with the raw amino-acid sequence, 277 residues long: Cis-2,3-dihydrobiphenyl-2,3-diol dehydrogenase (277 aa).

9 to 33 (LITGGASGLGRALVDRFVAERAKVA) provides a ligand contact to NAD(+). Residue S142 participates in substrate binding. The active-site Proton acceptor is Y155.

It belongs to the short-chain dehydrogenases/reductases (SDR) family. As to quaternary structure, homotetramer.

The catalysed reaction is (2R,3S)-3-phenylcyclohexa-3,5-diene-1,2-diol + NAD(+) = biphenyl-2,3-diol + NADH + H(+). Its pathway is xenobiotic degradation; biphenyl degradation; 2-hydroxy-2,4-pentadienoate and benzoate from biphenyl: step 2/4. The polypeptide is Cis-2,3-dihydrobiphenyl-2,3-diol dehydrogenase (bphB) (Pseudomonas putida (Arthrobacter siderocapsulatus)).